We begin with the raw amino-acid sequence, 731 residues long: MASCPDSDNSWVLAGSESLPVETLGPASRMDPESERALQAPHSPSKTDGKELAGTMDGEGTLFQTESPQSGSILTEETEVKGTLEGDVCGVEPPGPGDTVVQGDLQETTVVTGLGPDTQDLEGQSPPQSLPSTPKAAWIREEGRCSSSDDDTDVDMEGLRRRRGREAGPPQPMVPLAVENQAGGEGAGGELGISLNMCLLGALVLLGLGVLLFSGGLSESETGPMEEVERQVLPDPEVLEAVGDRQDGLREQLQAPVPPDSVPSLQNMGLLLDKLAKENQDIRLLQAQLQAQKEELQSLMHQPKGLEEENAQLRGALQQGEAFQRALESELQQLRARLQGLEADCVRGPDGVCLSGGRGPQGDKAIREQGPREQEPELSFLKQKEQLEAEAQALRQELERQRRLLGSVQQDLERSLQDASRGDPAHAGLAELGHRLAQKLQGLENWGQDPGVSANASKAWHQKSHFQNSREWSGKEKWWDGQRDRKAEHWKHKKEESGRERKKNWGGQEDREPAGRWKEGRPRVEESGSKKEGKRQGPKEPPRKSGSFHSSGEKQKQPRWREGTKDSHDPLPSWAELLRPKYRAPQGCSGVDECARQEGLTFFGTELAPVRQQELASLLRTYLARLPWAGQLTKELPLSPAFFGEDGIFRHDRLRFRDFVDALEDSLEEVAVQQTGDDDEVDDFEDFIFSHFFGDKALKKRSGKKDKHSQSPRAAGPREGHSHSHHHHHRG.

Polar residues predominate over residues 1–10; that stretch reads MASCPDSDNS. Residues 1–155 form a disordered region; sequence MASCPDSDNS…SSSDDDTDVD (155 aa). A Phosphoserine modification is found at Ser-43. 2 stretches are compositionally biased toward polar residues: residues 62–75 and 121–132; these read LFQT…SILT and LEGQSPPQSLPS. 4 positions are modified to phosphoserine: Ser-129, Ser-146, Ser-147, and Ser-148. A Phosphothreonine modification is found at Thr-152. A coiled-coil region spans residues 270-348; the sequence is LLLDKLAKEN…QGLEADCVRG (79 aa). 3 disordered regions span residues 354-377, 447-572, and 698-731; these read LSGG…QEPE, GQDP…DPLP, and LKKR…HHRG. Over residues 364–375 the composition is skewed to basic and acidic residues; the sequence is KAIREQGPREQE. The stretch at 377–417 forms a coiled coil; sequence ELSFLKQKEQLEAEAQALRQELERQRRLLGSVQQDLERSLQ. 3 stretches are compositionally biased toward basic and acidic residues: residues 472-499, 508-543, and 551-569; these read WSGK…ESGR, QEDR…EPPR, and SGEK…DSHD. The short motif at 485–505 is the Nuclear localization signal element; the sequence is RKAEHWKHKKEESGRERKKNW. Ser-567 carries the phosphoserine modification. The short motif at 695 to 720 is the Nuclear localization signal element; that stretch reads DKALKKRSGKKDKHSQSPRAAGPREG. The segment covering 698-707 has biased composition (basic residues); it reads LKKRSGKKDK.

As to quaternary structure, interacts with TEX11. Interacts with ESR1, PBX1, PBX2 and PBX3. In terms of tissue distribution, expressed in early hematopoietic precursors.

It is found in the cytoplasm. It localises to the cytoskeleton. The protein resides in the nucleus. Its function is as follows. Regulator of pre-B-cell leukemia transcription factors (BPXs) function. Inhibits the binding of PBX1-HOX complex to DNA and blocks the transcriptional activity of E2A-PBX1. Tethers estrogen receptor-alpha (ESR1) to microtubules and allows them to influence estrogen receptors-alpha signaling. The protein is Pre-B-cell leukemia transcription factor-interacting protein 1 (PBXIP1) of Homo sapiens (Human).